Reading from the N-terminus, the 61-residue chain is Copper metallothionein 1-1 (61 aa).

Residues 1–8 constitute a propeptide that is removed on maturation; that stretch reads MFSELINF. Cysteine 15, cysteine 17, cysteine 19, cysteine 22, and cysteine 28 together coordinate Cu cation. Lysine 30 is covalently cross-linked (Glycyl lysine isopeptide (Lys-Gly) (interchain with G-Cter in ubiquitin)). Cu cation is bound by residues cysteine 32, cysteine 34, cysteine 38, cysteine 44, and cysteine 46. The interval 37–61 is disordered; that stretch reads GCNSDDKCPCGNKSEETKKSCCSGK. The span at 40–55 shows a compositional bias: basic and acidic residues; that stretch reads SDDKCPCGNKSEETKK.

It belongs to the metallothionein superfamily. Type 12 family.

Functionally, protects the cell against copper toxicity by tightly chelating copper ions. May also act as a depository for copper designated for the effective transfer into the apo forms of copper proteins. This chain is Copper metallothionein 1-1 (CUP1-1), found in Saccharomyces cerevisiae (strain ATCC 204508 / S288c) (Baker's yeast).